The chain runs to 493 residues: Glutamate--tRNA ligase (493 aa).

The 'HIGH' region signature appears at 10-20; the sequence is PSPTGDPHVGT. A 'KMSKS' region motif is present at residues 251-255; that stretch reads KLSKR. Lysine 254 is an ATP binding site.

Belongs to the class-I aminoacyl-tRNA synthetase family. Glutamate--tRNA ligase type 1 subfamily. As to quaternary structure, monomer.

It is found in the cytoplasm. The catalysed reaction is tRNA(Glu) + L-glutamate + ATP = L-glutamyl-tRNA(Glu) + AMP + diphosphate. In terms of biological role, catalyzes the attachment of glutamate to tRNA(Glu) in a two-step reaction: glutamate is first activated by ATP to form Glu-AMP and then transferred to the acceptor end of tRNA(Glu). The polypeptide is Glutamate--tRNA ligase (Marinomonas sp. (strain MWYL1)).